The sequence spans 550 residues: CTP synthase (550 aa).

Residues 1–277 (MNGSADAGPR…GRAVERALGL (277 aa)) are amidoligase domain. Residue S23 participates in CTP binding. S23 provides a ligand contact to UTP. An ATP-binding site is contributed by 24–29 (SLGKGI). Y64 is a binding site for L-glutamine. D81 serves as a coordination point for ATP. Residues D81 and E151 each coordinate Mg(2+). Residues 158-160 (DIE), 198-203 (KTKPTQ), and K234 contribute to the CTP site. UTP-binding positions include 198–203 (KTKPTQ) and K234. In terms of domain architecture, Glutamine amidotransferase type-1 spans 302 to 549 (KIAIAGKYVK…VEAALAYQER (248 aa)). G364 serves as a coordination point for L-glutamine. The Nucleophile; for glutamine hydrolysis role is filled by C391. Residues 392–395 (LGLQ), E415, and R472 contribute to the L-glutamine site. Residues H522 and E524 contribute to the active site.

Belongs to the CTP synthase family. In terms of assembly, homotetramer.

The catalysed reaction is UTP + L-glutamine + ATP + H2O = CTP + L-glutamate + ADP + phosphate + 2 H(+). It catalyses the reaction L-glutamine + H2O = L-glutamate + NH4(+). It carries out the reaction UTP + NH4(+) + ATP = CTP + ADP + phosphate + 2 H(+). Its pathway is pyrimidine metabolism; CTP biosynthesis via de novo pathway; CTP from UDP: step 2/2. Allosterically activated by GTP, when glutamine is the substrate; GTP has no effect on the reaction when ammonia is the substrate. The allosteric effector GTP functions by stabilizing the protein conformation that binds the tetrahedral intermediate(s) formed during glutamine hydrolysis. Inhibited by the product CTP, via allosteric rather than competitive inhibition. Functionally, catalyzes the ATP-dependent amination of UTP to CTP with either L-glutamine or ammonia as the source of nitrogen. Regulates intracellular CTP levels through interactions with the four ribonucleotide triphosphates. The sequence is that of CTP synthase from Thermus thermophilus (strain ATCC BAA-163 / DSM 7039 / HB27).